A 179-amino-acid polypeptide reads, in one-letter code: Orotate phosphoribosyltransferase (179 aa).

5-phospho-alpha-D-ribose 1-diphosphate contacts are provided by residues arginine 94, lysine 95, lysine 98, histidine 100, and 120–128 (EDTSTTGAS). Orotate contacts are provided by threonine 124 and arginine 152.

The protein belongs to the purine/pyrimidine phosphoribosyltransferase family. PyrE subfamily. As to quaternary structure, homodimer. Requires Mg(2+) as cofactor.

It carries out the reaction orotidine 5'-phosphate + diphosphate = orotate + 5-phospho-alpha-D-ribose 1-diphosphate. Its pathway is pyrimidine metabolism; UMP biosynthesis via de novo pathway; UMP from orotate: step 1/2. Catalyzes the transfer of a ribosyl phosphate group from 5-phosphoribose 1-diphosphate to orotate, leading to the formation of orotidine monophosphate (OMP). The chain is Orotate phosphoribosyltransferase from Mycobacterium leprae (strain TN).